Reading from the N-terminus, the 31-residue chain is Morintide mO3 (31 aa).

Positions Asn1–Gly30 constitute a Chitin-binding type-1 domain. Cystine bridges form between Cys4-Cys18 and Cys24-Cys28.

As to expression, seeds (at protein level).

Chitin-binding protein which functions in defense against chitin-containing fungal pathogens. The protein is Morintide mO3 of Moringa oleifera (Horseradish tree).